The chain runs to 304 residues: Aspartate carbamoyltransferase catalytic subunit (304 aa).

Positions 49 and 50 each coordinate carbamoyl phosphate. Lys-77 lines the L-aspartate pocket. Residues Arg-99, His-127, and Gln-130 each contribute to the carbamoyl phosphate site. L-aspartate is bound by residues Arg-160 and Arg-211. Carbamoyl phosphate-binding residues include Ala-250 and Pro-251. Position 303 is a phosphoserine (Ser-303).

Belongs to the aspartate/ornithine carbamoyltransferase superfamily. ATCase family. Heterododecamer (2C3:3R2) of six catalytic PyrB chains organized as two trimers (C3), and six regulatory PyrI chains organized as three dimers (R2).

It catalyses the reaction carbamoyl phosphate + L-aspartate = N-carbamoyl-L-aspartate + phosphate + H(+). The protein operates within pyrimidine metabolism; UMP biosynthesis via de novo pathway; (S)-dihydroorotate from bicarbonate: step 2/3. Its function is as follows. Catalyzes the condensation of carbamoyl phosphate and aspartate to form carbamoyl aspartate and inorganic phosphate, the committed step in the de novo pyrimidine nucleotide biosynthesis pathway. This is Aspartate carbamoyltransferase catalytic subunit from Bacillus subtilis (strain 168).